The primary structure comprises 120 residues: Protein VraC (120 aa).

The polypeptide is Protein VraC (Staphylococcus epidermidis (strain ATCC 35984 / DSM 28319 / BCRC 17069 / CCUG 31568 / BM 3577 / RP62A)).